The primary structure comprises 310 residues: N-acetyl-gamma-glutamyl-phosphate reductase (310 aa).

Residue Cys-117 is part of the active site.

The protein belongs to the NAGSA dehydrogenase family. Type 2 subfamily.

The protein resides in the cytoplasm. The enzyme catalyses N-acetyl-L-glutamate 5-semialdehyde + phosphate + NADP(+) = N-acetyl-L-glutamyl 5-phosphate + NADPH + H(+). Its pathway is amino-acid biosynthesis; L-arginine biosynthesis; N(2)-acetyl-L-ornithine from L-glutamate: step 3/4. In terms of biological role, catalyzes the NADPH-dependent reduction of N-acetyl-5-glutamyl phosphate to yield N-acetyl-L-glutamate 5-semialdehyde. The sequence is that of N-acetyl-gamma-glutamyl-phosphate reductase from Brucella melitensis biotype 1 (strain ATCC 23456 / CCUG 17765 / NCTC 10094 / 16M).